Reading from the N-terminus, the 115-residue chain is Replication initiation control protein YabA (115 aa).

Zn(2+) is bound by residues H90, C92, C106, and C109.

It belongs to the YabA family. In terms of assembly, homotetramer. Interacts with both DnaA and DnaN, acting as a bridge between these two proteins. The cofactor is Zn(2+).

The protein localises to the cytoplasm. It localises to the nucleoid. In terms of biological role, involved in control of chromosome replication initiation. Inhibits the cooperative binding of DnaA to the oriC region, thus negatively regulating initiation of chromosome replication. Inhibits the ability of DnaA-ATP to form a helix on DNA; does not disassemble preformed DnaA-DNA helices. Decreases the residence time of DnaA on the chromosome at its binding sites (oriC, replication forks and promoter-binding sites). Tethers DnaA to the replication machinery via the DNA polymerase beta sliding clamp subunit (dnaN). Associates with oriC and other DnaA targets on the chromosome in a DnaA-dependent manner. This is Replication initiation control protein YabA from Staphylococcus aureus (strain bovine RF122 / ET3-1).